The chain runs to 566 residues: Pyrophosphate--fructose 6-phosphate 1-phosphotransferase subunit beta 1 (566 aa).

Position 16 is a phosphoserine (Ser16). Gly105 provides a ligand contact to diphosphate. Position 199 (Asp199) interacts with Mg(2+). Substrate is bound by residues 227–229 (TID), 266–267 (KY), 274–276 (MGR), Glu335, and 440–443 (YEGR). Asp229 (proton acceptor) is an active-site residue.

It belongs to the phosphofructokinase type A (PFKA) family. PPi-dependent PFK group II subfamily. Clade 'Long' sub-subfamily. In terms of assembly, tetramer of two alpha (regulatory) and two beta (catalytic) chains. Mg(2+) is required as a cofactor.

It is found in the cytoplasm. The enzyme catalyses beta-D-fructose 6-phosphate + diphosphate = beta-D-fructose 1,6-bisphosphate + phosphate + H(+). It participates in carbohydrate degradation; glycolysis; D-glyceraldehyde 3-phosphate and glycerone phosphate from D-glucose: step 3/4. Its activity is regulated as follows. Allosterically activated by fructose 2,6-bisphosphate. In terms of biological role, catalytic subunit of pyrophosphate--fructose 6-phosphate 1-phosphotransferase. Catalyzes the phosphorylation of D-fructose 6-phosphate, the first committing step of glycolysis. Uses inorganic phosphate (PPi) as phosphoryl donor instead of ATP like common ATP-dependent phosphofructokinases (ATP-PFKs), which renders the reaction reversible, and can thus function both in glycolysis and gluconeogenesis. In Arabidopsis thaliana (Mouse-ear cress), this protein is Pyrophosphate--fructose 6-phosphate 1-phosphotransferase subunit beta 1.